The sequence spans 665 residues: Translation factor guf1, mitochondrial (665 aa).

Residues 1 to 40 (MRGCLQLARWLSAAPTRPAASHWPGLCAAPRFFSHSAILR) constitute a mitochondrion transit peptide. The region spanning 67–247 (ERYRNFCIVA…TVVDKIPAPI (181 aa)) is the tr-type G domain. Residues 76–83 (AHVDHGKS), 140–144 (DTPGH), and 194–197 (NKVD) each bind GTP.

The protein belongs to the TRAFAC class translation factor GTPase superfamily. Classic translation factor GTPase family. LepA subfamily.

The protein resides in the mitochondrion inner membrane. It carries out the reaction GTP + H2O = GDP + phosphate + H(+). Promotes mitochondrial protein synthesis. May act as a fidelity factor of the translation reaction, by catalyzing a one-codon backward translocation of tRNAs on improperly translocated ribosomes. Binds to mitochondrial ribosomes in a GTP-dependent manner. The sequence is that of Translation factor guf1, mitochondrial (guf1) from Aspergillus terreus (strain NIH 2624 / FGSC A1156).